The primary structure comprises 199 residues: Probable nicotinate-nucleotide adenylyltransferase (199 aa).

This sequence belongs to the NadD family.

The catalysed reaction is nicotinate beta-D-ribonucleotide + ATP + H(+) = deamido-NAD(+) + diphosphate. Its pathway is cofactor biosynthesis; NAD(+) biosynthesis; deamido-NAD(+) from nicotinate D-ribonucleotide: step 1/1. Its function is as follows. Catalyzes the reversible adenylation of nicotinate mononucleotide (NaMN) to nicotinic acid adenine dinucleotide (NaAD). The protein is Probable nicotinate-nucleotide adenylyltransferase of Roseiflexus castenholzii (strain DSM 13941 / HLO8).